The primary structure comprises 670 residues: DNA ligase (670 aa).

Residues 32–36, 81–82, and E114 contribute to the NAD(+) site; these read DSEYD and SL. K116 serves as the catalytic N6-AMP-lysine intermediate. Positions 137, 174, 291, and 315 each coordinate NAD(+). Zn(2+)-binding residues include C409, C412, C427, and C433. Residues 592 to 670 form the BRCT domain; sequence ASENLFKDKT…EEEFLAQITR (79 aa).

The protein belongs to the NAD-dependent DNA ligase family. LigA subfamily. It depends on Mg(2+) as a cofactor. The cofactor is Mn(2+).

It carries out the reaction NAD(+) + (deoxyribonucleotide)n-3'-hydroxyl + 5'-phospho-(deoxyribonucleotide)m = (deoxyribonucleotide)n+m + AMP + beta-nicotinamide D-nucleotide.. DNA ligase that catalyzes the formation of phosphodiester linkages between 5'-phosphoryl and 3'-hydroxyl groups in double-stranded DNA using NAD as a coenzyme and as the energy source for the reaction. It is essential for DNA replication and repair of damaged DNA. The sequence is that of DNA ligase from Haemophilus influenzae (strain 86-028NP).